The primary structure comprises 128 residues: Small ribosomal subunit protein uS12 (128 aa).

The tract at residues 1–30 is disordered; it reads MPTINQLIRKGREPKERKSKSPALMGNPQK. Aspartate 89 carries the 3-methylthioaspartic acid modification. The interval 106–128 is disordered; sequence GVEGRKQGRSKYGTKRPKEGGKK.

The protein belongs to the universal ribosomal protein uS12 family. As to quaternary structure, part of the 30S ribosomal subunit. Contacts proteins S8 and S17. May interact with IF1 in the 30S initiation complex.

With S4 and S5 plays an important role in translational accuracy. In terms of biological role, interacts with and stabilizes bases of the 16S rRNA that are involved in tRNA selection in the A site and with the mRNA backbone. Located at the interface of the 30S and 50S subunits, it traverses the body of the 30S subunit contacting proteins on the other side and probably holding the rRNA structure together. The combined cluster of proteins S8, S12 and S17 appears to hold together the shoulder and platform of the 30S subunit. This chain is Small ribosomal subunit protein uS12, found in Dictyoglomus thermophilum (strain ATCC 35947 / DSM 3960 / H-6-12).